The following is a 258-amino-acid chain: Putative cysteine-rich repeat secretory protein 61 (258 aa).

The N-terminal stretch at 1–31 is a signal peptide; that stretch reads MSSSFIPKRIALVLNLAMVAIQVFFIRSVSS. Gnk2-homologous domains lie at 38 to 140 and 146 to 253; these read YLYH…PTAF and DKNK…IYPF.

Belongs to the cysteine-rich repeat secretory protein family.

It localises to the secreted. This Arabidopsis thaliana (Mouse-ear cress) protein is Putative cysteine-rich repeat secretory protein 61 (CRRSP61).